A 998-amino-acid chain; its full sequence is Type II restriction enzyme and methyltransferase RM.Eco57I (998 aa).

In the C-terminal section; belongs to the N(4)/N(6)-methyltransferase family. In terms of assembly, monomer.

It catalyses the reaction Endonucleolytic cleavage of DNA to give specific double-stranded fragments with terminal 5'-phosphates.. The catalysed reaction is a 2'-deoxyadenosine in DNA + S-adenosyl-L-methionine = an N(6)-methyl-2'-deoxyadenosine in DNA + S-adenosyl-L-homocysteine + H(+). With respect to regulation, mg(2+) is absolutely required for DNA restriction. Functionally, an E, G and S subtype restriction enzyme that recognizes the (non-palindromic) double-stranded sequence 5'-CTGAAG-3' and cleaves respectively 22 bases after C-1 and 14 bases before C'-1; cleavage of lambda DNA is never complete. Also acts as a methylase that causes specific methylation on A-5 in 5'-CTGAAG-3', the other strand is methylated by the M.Eco57I methylase. This is Type II restriction enzyme and methyltransferase RM.Eco57I from Escherichia coli.